Reading from the N-terminus, the 68-residue chain is MGTKIKTHKGTKKRFRLSAKGKAMHRQSGTSHLAKGLSKKRRRNLRGTTAVAECMEPTIHAALNGHSY.

Basic residues predominate over residues 1–25; sequence MGTKIKTHKGTKKRFRLSAKGKAMH. The disordered stretch occupies residues 1–43; that stretch reads MGTKIKTHKGTKKRFRLSAKGKAMHRQSGTSHLAKGLSKKRRR.

Belongs to the bacterial ribosomal protein bL35 family.

The chain is Large ribosomal subunit protein bL35 from Rhodopirellula baltica (strain DSM 10527 / NCIMB 13988 / SH1).